We begin with the raw amino-acid sequence, 274 residues long: Large ribosomal subunit protein uL2 (274 aa).

Residues 224–259 are disordered; it reads AMNPVDHPHGGGEGRTSGGRHPVTPWGIPTKGYKTR.

Belongs to the universal ribosomal protein uL2 family. As to quaternary structure, part of the 50S ribosomal subunit. Forms a bridge to the 30S subunit in the 70S ribosome.

In terms of biological role, one of the primary rRNA binding proteins. Required for association of the 30S and 50S subunits to form the 70S ribosome, for tRNA binding and peptide bond formation. It has been suggested to have peptidyltransferase activity; this is somewhat controversial. Makes several contacts with the 16S rRNA in the 70S ribosome. The protein is Large ribosomal subunit protein uL2 of Citrifermentans bemidjiense (strain ATCC BAA-1014 / DSM 16622 / JCM 12645 / Bem) (Geobacter bemidjiensis).